A 753-amino-acid polypeptide reads, in one-letter code: Oligopeptide transporter 5 (753 aa).

Helical transmembrane passes span 56 to 76 (TWFL…FFGY), 80 to 100 (PLTV…KLMA), 132 to 152 (ITIF…LTIV), 163 to 183 (AAAM…AGMF), 224 to 244 (FFLI…YLFP), 296 to 316 (FFAI…ILPI), 368 to 388 (YLSI…TATI), 432 to 452 (WWFV…CEGF), 461 to 481 (WGLL…GVIL), 506 to 528 (PLAN…YFVG), 544 to 564 (FIVQ…TTWW), 583 to 603 (PWTC…GIIG), 615 to 635 (PGMN…WFFA), 662 to 682 (AKAV…YYIF), and 695 to 715 (ILSA…YFAL).

Belongs to the oligopeptide OPT transporter (TC 2.A.67.1) family. In terms of tissue distribution, expressed predominantly in flowers, and at a very low level in leaves and roots.

It is found in the membrane. Functionally, involved in the translocation of tetra- and pentapeptides across the cellular membrane in an energy-dependent manner. In Arabidopsis thaliana (Mouse-ear cress), this protein is Oligopeptide transporter 5 (OPT5).